Reading from the N-terminus, the 224-residue chain is MSRISKAEMSRLLSVYFIMGSNNCTKDPLQILKDALEGGITIFQFREKGEGALTGEERICFAKELQAICKEYGVPFIVNDDVELALELDADGVHVGQEDEGITSVREKMGDKIIGVSTHTIEEARWAIENGADYLGVGPIFPTSTKKDTKAVQGTKGLAHFREQGITIPIVGIGGISIENTASVIEAGADGVSVISAISLAESAYESTKQLVEEVSKKGTSHKY.

Residues 44 to 48 and Asn-79 each bind 4-amino-2-methyl-5-(diphosphooxymethyl)pyrimidine; that span reads QFREK. Mg(2+)-binding residues include Asp-80 and Asp-99. Ser-117 contacts 4-amino-2-methyl-5-(diphosphooxymethyl)pyrimidine. 143 to 145 serves as a coordination point for 2-[(2R,5Z)-2-carboxy-4-methylthiazol-5(2H)-ylidene]ethyl phosphate; it reads TST. Residue Lys-146 coordinates 4-amino-2-methyl-5-(diphosphooxymethyl)pyrimidine. 2-[(2R,5Z)-2-carboxy-4-methylthiazol-5(2H)-ylidene]ethyl phosphate-binding positions include Gly-175 and 195-196; that span reads IS.

The protein belongs to the thiamine-phosphate synthase family. Mg(2+) serves as cofactor.

It catalyses the reaction 2-[(2R,5Z)-2-carboxy-4-methylthiazol-5(2H)-ylidene]ethyl phosphate + 4-amino-2-methyl-5-(diphosphooxymethyl)pyrimidine + 2 H(+) = thiamine phosphate + CO2 + diphosphate. The catalysed reaction is 2-(2-carboxy-4-methylthiazol-5-yl)ethyl phosphate + 4-amino-2-methyl-5-(diphosphooxymethyl)pyrimidine + 2 H(+) = thiamine phosphate + CO2 + diphosphate. The enzyme catalyses 4-methyl-5-(2-phosphooxyethyl)-thiazole + 4-amino-2-methyl-5-(diphosphooxymethyl)pyrimidine + H(+) = thiamine phosphate + diphosphate. Its pathway is cofactor biosynthesis; thiamine diphosphate biosynthesis; thiamine phosphate from 4-amino-2-methyl-5-diphosphomethylpyrimidine and 4-methyl-5-(2-phosphoethyl)-thiazole: step 1/1. Condenses 4-methyl-5-(beta-hydroxyethyl)thiazole monophosphate (THZ-P) and 2-methyl-4-amino-5-hydroxymethyl pyrimidine pyrophosphate (HMP-PP) to form thiamine monophosphate (TMP). This chain is Thiamine-phosphate synthase, found in Bacillus cereus (strain ATCC 10987 / NRS 248).